Consider the following 480-residue polypeptide: RuvB-like helicase 2 (480 aa).

Residue Gly-73–Thr-80 participates in ATP binding.

Belongs to the RuvB family. As to quaternary structure, forms homohexameric rings. May form a dodecamer with rept made of two stacked hexameric rings. Component of the chromatin remodeling Ino80 complex.

It is found in the nucleus. It catalyses the reaction ATP + H2O = ADP + phosphate + H(+). Acts as a transcriptional coactivator in Wg signaling caused by altered arm signaling. Pont and rept interfere antagonistically with nuclear arm signaling function, and are required to enhance or reduce arm activity, respectively. Also an essential cofactor for the normal function of Myc; required for cellular proliferation and growth. Its function is as follows. Proposed core component of the chromatin remodeling Ino80 complex which is involved in transcriptional regulation, DNA replication and probably DNA repair. The protein is RuvB-like helicase 2 of Drosophila pseudoobscura pseudoobscura (Fruit fly).